We begin with the raw amino-acid sequence, 644 residues long: Threonine--tRNA ligase (644 aa).

A TGS domain is found at E3–T64. Residues D245–P542 are catalytic. Residues C338, H389, and H519 each contribute to the Zn(2+) site.

This sequence belongs to the class-II aminoacyl-tRNA synthetase family. As to quaternary structure, homodimer. The cofactor is Zn(2+).

The protein resides in the cytoplasm. The catalysed reaction is tRNA(Thr) + L-threonine + ATP = L-threonyl-tRNA(Thr) + AMP + diphosphate + H(+). Its function is as follows. Catalyzes the attachment of threonine to tRNA(Thr) in a two-step reaction: L-threonine is first activated by ATP to form Thr-AMP and then transferred to the acceptor end of tRNA(Thr). Also edits incorrectly charged L-seryl-tRNA(Thr). This chain is Threonine--tRNA ligase, found in Geobacillus sp. (strain WCH70).